Consider the following 330-residue polypeptide: ATP-dependent (S)-NAD(P)H-hydrate dehydratase (330 aa).

Residues 36-327 (VIPLVRNTIP…QEINSAFKKL (292 aa)) enclose the YjeF C-terminal domain. (6S)-NADPHX is bound by residues Gly-136 and 189–195 (NFMEFTR). ATP is bound by residues 229–233 (KGEED) and 248–257 (GSGRRCGGQG). Residue Asp-258 participates in (6S)-NADPHX binding.

This sequence belongs to the NnrD/CARKD family. It depends on Mg(2+) as a cofactor.

It catalyses the reaction (6S)-NADHX + ATP = ADP + phosphate + NADH + H(+). The catalysed reaction is (6S)-NADPHX + ATP = ADP + phosphate + NADPH + H(+). Its function is as follows. Catalyzes the dehydration of the S-form of NAD(P)HX at the expense of ATP, which is converted to ADP. Together with NAD(P)HX epimerase, which catalyzes the epimerization of the S- and R-forms, the enzyme allows the repair of both epimers of NAD(P)HX, a damaged form of NAD(P)H that is a result of enzymatic or heat-dependent hydration. The sequence is that of ATP-dependent (S)-NAD(P)H-hydrate dehydratase from Danio rerio (Zebrafish).